A 142-amino-acid chain; its full sequence is Large ribosomal subunit protein uL13 (142 aa).

Belongs to the universal ribosomal protein uL13 family. Part of the 50S ribosomal subunit.

This protein is one of the early assembly proteins of the 50S ribosomal subunit, although it is not seen to bind rRNA by itself. It is important during the early stages of 50S assembly. This Acidithiobacillus ferrooxidans (strain ATCC 23270 / DSM 14882 / CIP 104768 / NCIMB 8455) (Ferrobacillus ferrooxidans (strain ATCC 23270)) protein is Large ribosomal subunit protein uL13.